A 175-amino-acid polypeptide reads, in one-letter code: Translation initiation factor IF-3 (175 aa).

Belongs to the IF-3 family. Monomer.

It is found in the cytoplasm. Functionally, IF-3 binds to the 30S ribosomal subunit and shifts the equilibrium between 70S ribosomes and their 50S and 30S subunits in favor of the free subunits, thus enhancing the availability of 30S subunits on which protein synthesis initiation begins. In Chromobacterium violaceum (strain ATCC 12472 / DSM 30191 / JCM 1249 / CCUG 213 / NBRC 12614 / NCIMB 9131 / NCTC 9757 / MK), this protein is Translation initiation factor IF-3.